Consider the following 348-residue polypeptide: Isopentenyl-diphosphate delta-isomerase (348 aa).

14-15 (RK) lines the substrate pocket. Residues Ser72, 73-75 (SMT), Ser103, and Asn131 contribute to the FMN site. 103–105 (SQR) serves as a coordination point for substrate. Gln166 lines the substrate pocket. Glu167 is a binding site for Mg(2+). FMN-binding positions include Lys198, Thr228, 278–280 (GIR), and 299–300 (AR).

Belongs to the IPP isomerase type 2 family. In terms of assembly, homooctamer. Dimer of tetramers. The cofactor is FMN. NADPH is required as a cofactor. Mg(2+) serves as cofactor.

It is found in the cytoplasm. It catalyses the reaction isopentenyl diphosphate = dimethylallyl diphosphate. Involved in the biosynthesis of isoprenoids. Catalyzes the 1,3-allylic rearrangement of the homoallylic substrate isopentenyl (IPP) to its allylic isomer, dimethylallyl diphosphate (DMAPP). The sequence is that of Isopentenyl-diphosphate delta-isomerase from Synechococcus sp. (strain ATCC 27144 / PCC 6301 / SAUG 1402/1) (Anacystis nidulans).